A 278-amino-acid chain; its full sequence is Energy-coupling factor transporter ATP-binding protein EcfA (278 aa).

The 236-residue stretch at 4–239 folds into the ABC transporter domain; it reads LETRDLKYSY…SETVRSANLR (236 aa). 37–44 lines the ATP pocket; that stretch reads GPNGAGKS.

Belongs to the ABC transporter superfamily. Energy-coupling factor EcfA family. In terms of assembly, forms a stable energy-coupling factor (ECF) transporter complex composed of 2 membrane-embedded substrate-binding proteins (S component), 2 ATP-binding proteins (A component) and 2 transmembrane proteins (T component).

The protein localises to the cell membrane. ATP-binding (A) component of a common energy-coupling factor (ECF) ABC-transporter complex. Unlike classic ABC transporters this ECF transporter provides the energy necessary to transport a number of different substrates. This Methanococcus maripaludis (strain DSM 14266 / JCM 13030 / NBRC 101832 / S2 / LL) protein is Energy-coupling factor transporter ATP-binding protein EcfA.